A 403-amino-acid polypeptide reads, in one-letter code: 8-amino-7-oxononanoate synthase (403 aa).

R30 provides a ligand contact to substrate. G121–Y122 is a binding site for pyridoxal 5'-phosphate. Substrate is bound at residue H146. The pyridoxal 5'-phosphate site is built by S192, H220, and T248. At K251 the chain carries N6-(pyridoxal phosphate)lysine. T367 is a binding site for substrate.

It belongs to the class-II pyridoxal-phosphate-dependent aminotransferase family. BioF subfamily. Homodimer. Pyridoxal 5'-phosphate is required as a cofactor.

The enzyme catalyses 6-carboxyhexanoyl-[ACP] + L-alanine + H(+) = (8S)-8-amino-7-oxononanoate + holo-[ACP] + CO2. It participates in cofactor biosynthesis; biotin biosynthesis. Catalyzes the decarboxylative condensation of pimeloyl-[acyl-carrier protein] and L-alanine to produce 8-amino-7-oxononanoate (AON), [acyl-carrier protein], and carbon dioxide. The chain is 8-amino-7-oxononanoate synthase from Burkholderia vietnamiensis (strain G4 / LMG 22486) (Burkholderia cepacia (strain R1808)).